The chain runs to 847 residues: Putative disease resistance RPP13-like protein 3 (847 aa).

Residues 24–41 adopt a coiled-coil conformation; the sequence is LMGVKDDLEELKTELTCI. An NB-ARC domain is found at 143–453; the sequence is TNVRVRQLRR…AEGFIQEDEE (311 aa). ATP is bound at residue 192–199; the sequence is GMGGLGKT.

This sequence belongs to the disease resistance NB-LRR family. RPP13 subfamily.

Functionally, potential disease resistance protein. The protein is Putative disease resistance RPP13-like protein 3 (RPP13L3) of Arabidopsis thaliana (Mouse-ear cress).